The sequence spans 647 residues: Chaperone protein DnaK (647 aa).

Phosphothreonine; by autocatalysis is present on Thr-200. The segment covering 611-631 has biased composition (low complexity); sequence AGEQGAAGAAGAGAQQQAQPQ. Positions 611 to 647 are disordered; it reads AGEQGAAGAAGAGAQQQAQPQDDNVVDAEFKEVNDKK. A compositionally biased stretch (basic and acidic residues) spans 638 to 647; sequence AEFKEVNDKK.

It belongs to the heat shock protein 70 family.

Acts as a chaperone. The protein is Chaperone protein DnaK of Cupriavidus taiwanensis (strain DSM 17343 / BCRC 17206 / CCUG 44338 / CIP 107171 / LMG 19424 / R1) (Ralstonia taiwanensis (strain LMG 19424)).